Consider the following 649-residue polypeptide: Threonine--tRNA ligase (649 aa).

The region spanning 1–60 (MHVTLPDGKQLDLQPGATALDAAKAIGPRLAQDALGATANGELTDLMTPLSDGASITLIT) is the TGS domain. A catalytic region spans residues 248–544 (DHRKLGKELE…LIEHYAGDFP (297 aa)). The Zn(2+) site is built by Cys-341, His-392, and His-521.

It belongs to the class-II aminoacyl-tRNA synthetase family. Homodimer. Requires Zn(2+) as cofactor.

It localises to the cytoplasm. The enzyme catalyses tRNA(Thr) + L-threonine + ATP = L-threonyl-tRNA(Thr) + AMP + diphosphate + H(+). Its function is as follows. Catalyzes the attachment of threonine to tRNA(Thr) in a two-step reaction: L-threonine is first activated by ATP to form Thr-AMP and then transferred to the acceptor end of tRNA(Thr). Also edits incorrectly charged L-seryl-tRNA(Thr). This chain is Threonine--tRNA ligase, found in Deinococcus radiodurans (strain ATCC 13939 / DSM 20539 / JCM 16871 / CCUG 27074 / LMG 4051 / NBRC 15346 / NCIMB 9279 / VKM B-1422 / R1).